The sequence spans 416 residues: Choline/ethanolaminephosphotransferase 1 (416 aa).

Residues 1–20 are disordered; it reads MSGHRSTRKRCGDSHPESPV. A Phosphoserine modification is found at serine 18. Threonine 40 carries the phosphothreonine modification. Asparagine 86 is a binding site for CDP-choline. 2 helical membrane-spanning segments follow: residues 89–108 and 116–133; these read TIIG…FYCP and LWAY…QSLD. Aspartate 133 provides a ligand contact to Mg(2+). Asparagine 144 is a glycosylation site (N-linked (GlcNAc...) asparagine). Position 151 (glutamate 151) interacts with CDP-choline. Aspartate 154 serves as a coordination point for Mg(2+). Histidine 155 (proton acceptor) is an active-site residue. The next 8 helical transmembrane spans lie at 156–176, 180–199, 210–230, 246–267, 286–306, 315–334, 349–363, and 368–388; these read GCDS…VQLG, DWMF…AHWQ, IIDV…AVIG, MKIF…NYFR, VLSP…IYKK, HPCL…TNKL, TAFI…DQYF, and DEYI…IRYC. Mg(2+) is bound at residue aspartate 158.

Belongs to the CDP-alcohol phosphatidyltransferase class-I family. As to quaternary structure, homodimer. Mg(2+) serves as cofactor. It depends on Mn(2+) as a cofactor. As to expression, ubiquitously expressed.

It localises to the endoplasmic reticulum membrane. It is found in the nucleus membrane. The catalysed reaction is CDP-ethanolamine + a 1,2-diacyl-sn-glycerol = a 1,2-diacyl-sn-glycero-3-phosphoethanolamine + CMP + H(+). It carries out the reaction CDP-choline + a 1,2-diacyl-sn-glycerol = a 1,2-diacyl-sn-glycero-3-phosphocholine + CMP + H(+). It catalyses the reaction 1-O-alkyl-2-acyl-sn-glycerol + CDP-choline = a 1-O-alkyl-2-acyl-sn-glycero-3-phosphocholine + CMP + H(+). The enzyme catalyses a 1-O-(1Z-alkenyl)-2-acyl-sn-glycerol + CDP-choline = a 1-O-(1Z-alkenyl)-2-acyl-sn-glycero-3-phosphocholine + CMP + H(+). The catalysed reaction is 1,2-dioctanoyl-sn-glycerol + CDP-choline = 1,2-dioctanoyl-sn-glycero-3-phosphocholine + CMP + H(+). It carries out the reaction 1,2-didecanoyl-sn-glycerol + CDP-choline = 1,2-didecanoyl-sn-glycero-3-phosphocholine + CMP + H(+). It catalyses the reaction CDP-choline + 1,2-di-(9Z-octadecenoyl)-sn-glycerol = 1,2-di-(9Z-octadecenoyl)-sn-glycero-3-phosphocholine + CMP + H(+). The enzyme catalyses 1-hexadecanoyl-2-(9Z-octadecenoyl)-sn-glycerol + CDP-choline = 1-hexadecanoyl-2-(9Z-octadecenoyl)-sn-glycero-3-phosphocholine + CMP + H(+). The catalysed reaction is CDP-ethanolamine + 1,2-di-(9Z-octadecenoyl)-sn-glycerol = 1,2-di-(9Z-octadecenoyl)-sn-glycero-3-phosphoethanolamine + CMP + H(+). It carries out the reaction 1-hexadecanoyl-2-(9Z-octadecenoyl)-sn-glycerol + CDP-ethanolamine = 1-hexadecanoyl-2-(9Z-octadecenoyl)-sn-glycero-3-phosphoethanolamine + CMP + H(+). It catalyses the reaction 1-hexadecanoyl-2-(4Z,7Z,10Z,13Z,16Z,19Z-docosahexaenoyl)-sn-glycerol + CDP-choline = 1-hexadecanoyl-2-(4Z,7Z,10Z,13Z,16Z,19Z-docosahexaenoyl)-sn-glycero-3-phosphocholine + CMP + H(+). The enzyme catalyses 1,2-di-(9Z-hexadecenoyl)-sn-glycerol + CDP-choline = 1,2-di-(9Z-hexadecenoyl)-sn-glycero-3-phosphocholine + CMP + H(+). The catalysed reaction is 1,2-di-(9Z-hexadecenoyl)-sn-glycerol + CDP-ethanolamine = 1,2-di-(9Z-hexadecenoyl)-sn-glycero-3-phosphoethanolamine + CMP + H(+). It carries out the reaction 1-O-hexadecyl-2-acetyl-sn-glycerol + CDP-choline = 1-O-hexadecyl-2-acetyl-sn-glycero-3-phosphocholine + CMP + H(+). It catalyses the reaction 1-O-hexadecyl-2-(5Z,8Z,11Z,14Z-eicosatetraenoyl)-sn-glycerol + CDP-choline = 1-O-hexadecyl-2-(5Z,8Z,11Z,14Z)-eicosatetraenoyl-sn-glycero-3-phosphocholine + CMP + H(+). The protein operates within phospholipid metabolism; phosphatidylethanolamine biosynthesis; phosphatidylethanolamine from ethanolamine: step 3/3. Its pathway is phospholipid metabolism; phosphatidylcholine biosynthesis; phosphatidylcholine from phosphocholine: step 2/2. Its function is as follows. Catalyzes both phosphatidylcholine and phosphatidylethanolamine biosynthesis from CDP-choline and CDP-ethanolamine, respectively. Involved in protein-dependent process of phospholipid transport to distribute phosphatidyl choline to the lumenal surface. Has a higher cholinephosphotransferase activity than ethanolaminephosphotransferase activity. The protein is Choline/ethanolaminephosphotransferase 1 of Homo sapiens (Human).